The sequence spans 122 residues: Large ribosomal subunit protein uL14 (122 aa).

Belongs to the universal ribosomal protein uL14 family. In terms of assembly, part of the 50S ribosomal subunit. Forms a cluster with proteins L3 and L19. In the 70S ribosome, L14 and L19 interact and together make contacts with the 16S rRNA in bridges B5 and B8.

Its function is as follows. Binds to 23S rRNA. Forms part of two intersubunit bridges in the 70S ribosome. The protein is Large ribosomal subunit protein uL14 of Rickettsia rickettsii (strain Iowa).